Here is a 239-residue protein sequence, read N- to C-terminus: Transcriptional regulatory protein DcuR (239 aa).

The Response regulatory domain maps to 3–121 (NVLIIDDDAM…RFEEALTGWR (119 aa)). Position 56 is a 4-aspartylphosphate (D56). The segment at residues 181-200 (TDELANEVNISRVSCRKYLI) is a DNA-binding region (H-T-H motif).

Phosphorylated and activated by DcuS.

The protein localises to the cytoplasm. In terms of biological role, member of the two-component regulatory system DcuR/DcuS. Involved in the C4-dicarboxylate-stimulated regulation of the genes encoding the anaerobic fumarate respiratory system (frdABCD; nuoAN; dcuB; dcuC; sdhCDAB; etc.). Weakly regulates the aerobic C4-dicarboxylate transporter dctA. The protein is Transcriptional regulatory protein DcuR (dcuR) of Escherichia coli O157:H7.